The primary structure comprises 165 residues: MAHVLAVYPGTFDPITLGHEDLVRRAARLFDRVIVAVAIAHHKKTLFSLDERMEMARQALADCPQVQVESFEGLVTEFTAARGGTAMVRGLRSGTDFDYEFQLAGMNRALVPGVETVFLTPASQYQFISSTLVREIGTLGGDVAQFVSPGVHERLLHKLGRTAAA.

Threonine 11 provides a ligand contact to substrate. ATP contacts are provided by residues 11-12 and histidine 19; that span reads TF. Lysine 43, valine 75, and arginine 89 together coordinate substrate. Residues 90-92, glutamate 100, and 125-131 contribute to the ATP site; these read GLR and YQFISST.

The protein belongs to the bacterial CoaD family. Homohexamer. Requires Mg(2+) as cofactor.

Its subcellular location is the cytoplasm. The catalysed reaction is (R)-4'-phosphopantetheine + ATP + H(+) = 3'-dephospho-CoA + diphosphate. The protein operates within cofactor biosynthesis; coenzyme A biosynthesis; CoA from (R)-pantothenate: step 4/5. Its function is as follows. Reversibly transfers an adenylyl group from ATP to 4'-phosphopantetheine, yielding dephospho-CoA (dPCoA) and pyrophosphate. This is Phosphopantetheine adenylyltransferase from Acidovorax ebreus (strain TPSY) (Diaphorobacter sp. (strain TPSY)).